A 510-amino-acid chain; its full sequence is Light-independent protochlorophyllide reductase subunit B (510 aa).

[4Fe-4S] cluster is bound at residue Asp-36. The active-site Proton donor is Asp-296. 431 to 432 is a binding site for substrate; the sequence is GM.

Belongs to the ChlB/BchB/BchZ family. Protochlorophyllide reductase is composed of three subunits; ChlL, ChlN and ChlB. Forms a heterotetramer of two ChlB and two ChlN subunits. [4Fe-4S] cluster is required as a cofactor.

It localises to the plastid. The protein localises to the chloroplast. It catalyses the reaction chlorophyllide a + oxidized 2[4Fe-4S]-[ferredoxin] + 2 ADP + 2 phosphate = protochlorophyllide a + reduced 2[4Fe-4S]-[ferredoxin] + 2 ATP + 2 H2O. It functions in the pathway porphyrin-containing compound metabolism; chlorophyll biosynthesis (light-independent). In terms of biological role, component of the dark-operative protochlorophyllide reductase (DPOR) that uses Mg-ATP and reduced ferredoxin to reduce ring D of protochlorophyllide (Pchlide) to form chlorophyllide a (Chlide). This reaction is light-independent. The NB-protein (ChlN-ChlB) is the catalytic component of the complex. The chain is Light-independent protochlorophyllide reductase subunit B from Angiopteris evecta (Mule's foot fern).